A 693-amino-acid chain; its full sequence is Elongation factor G (693 aa).

The 275-residue stretch at 8–282 (EKTRNIGIMA…AVIDYLPSPL (275 aa)) folds into the tr-type G domain. Residues 17–24 (AHIDAGKT), 81–85 (DTPGH), and 135–138 (NKMD) contribute to the GTP site.

Belongs to the TRAFAC class translation factor GTPase superfamily. Classic translation factor GTPase family. EF-G/EF-2 subfamily.

The protein localises to the cytoplasm. In terms of biological role, catalyzes the GTP-dependent ribosomal translocation step during translation elongation. During this step, the ribosome changes from the pre-translocational (PRE) to the post-translocational (POST) state as the newly formed A-site-bound peptidyl-tRNA and P-site-bound deacylated tRNA move to the P and E sites, respectively. Catalyzes the coordinated movement of the two tRNA molecules, the mRNA and conformational changes in the ribosome. This Staphylococcus carnosus (strain TM300) protein is Elongation factor G.